Reading from the N-terminus, the 203-residue chain is AFG2-interacting ribosome maturation factor (203 aa).

As to quaternary structure, part of the 55LCC heterohexameric ATPase complex composed at least of AIRIM, AFG2A, AFG2B and CINP. Does not associate with pre-60S ribosomal particles. Post-translationally, phosphorylated on serines by CK2 kinase.

The protein localises to the nucleus. It is found in the cytoplasm. Part of the 55LCC heterohexameric ATPase complex which is chromatin-associated and promotes replisome proteostasis to maintain replication fork progression and genome stability. Required for replication fork progression, sister chromatid cohesion, and chromosome stability. The ATPase activity is specifically enhanced by replication fork DNA and is coupled to cysteine protease-dependent cleavage of replisome substrates in response to replication fork damage. Uses ATPase activity to process replisome substrates in S-phase, facilitating their proteolytic turnover from chromatin to ensure DNA replication and mitotic fidelity. Involved in the cytoplasmic maturation steps of pre-60S ribosomal particles by promoting the release of shuttling protein RSL24D1/RLP24 from the pre-ribosomal particles. The sequence is that of AFG2-interacting ribosome maturation factor from Homo sapiens (Human).